A 691-amino-acid chain; its full sequence is 1-butanol dehydrogenase (cytochrome c) (691 aa).

A signal peptide spans 1-38 (MLTTTFARKREESVPLRKGIQRALLGLSCLVLSTTSFA). Glu-84 lines the pyrroloquinoline quinone pocket. The cysteines at positions 130 and 131 are disulfide-linked. Pyrroloquinoline quinone-binding positions include Arg-136, Thr-181, and 197–198 (GA). Ca(2+) is bound by residues Glu-199 and Asp-322. Asp-322 acts as the Proton acceptor in catalysis. Pyrroloquinoline quinone contacts are provided by residues Lys-349, 408–409 (NW), and Val-558. The Cytochrome c domain maps to 605–684 (DDVAEGTGLY…KIKAFILGTA (80 aa)). 4 residues coordinate heme c: Cys-618, Cys-621, His-622, and Met-661.

Belongs to the bacterial PQQ dehydrogenase family. As to quaternary structure, monomer. It depends on pyrroloquinoline quinone as a cofactor. Requires Ca(2+) as cofactor. The cofactor is heme c.

It localises to the periplasm. The enzyme catalyses butan-1-ol + 2 Fe(III)-[cytochrome c] = butanal + 2 Fe(II)-[cytochrome c] + 2 H(+). Dehydrogenase activity is increased by ammonium ions. Involved in the metabolism of butane. Could be important in the detoxification of 1-butanol. Catalyzes the oxidation of 1-butanol to butyraldehyde. Also able to use 1-propanol, 2-pentanol, propionaldehyde and butyraldehyde as substrates. This Thauera butanivorans (strain ATCC 43655 / DSM 2080 / JCM 20651 / CCUG 51053 / NBRC 103042 / IAM 12574 / Bu B1211) (Pseudomonas butanovora) protein is 1-butanol dehydrogenase (cytochrome c).